Reading from the N-terminus, the 65-residue chain is Large ribosomal subunit protein bL32 (65 aa).

Basic residues predominate over residues 1–19 (MAVQKSRKTPSKRGMRRSH). The interval 1 to 32 (MAVQKSRKTPSKRGMRRSHNALVKSTLSEDQE) is disordered.

This sequence belongs to the bacterial ribosomal protein bL32 family.

The polypeptide is Large ribosomal subunit protein bL32 (Vesicomyosocius okutanii subsp. Calyptogena okutanii (strain HA)).